Reading from the N-terminus, the 182-residue chain is Protein GrpE (182 aa).

The interval 1 to 35 is disordered; sequence MTQENQTPPPEQENLAADPAVETTAETPAVKTPEQ.

The protein belongs to the GrpE family. Homodimer.

The protein localises to the cytoplasm. In terms of biological role, participates actively in the response to hyperosmotic and heat shock by preventing the aggregation of stress-denatured proteins, in association with DnaK and GrpE. It is the nucleotide exchange factor for DnaK and may function as a thermosensor. Unfolded proteins bind initially to DnaJ; upon interaction with the DnaJ-bound protein, DnaK hydrolyzes its bound ATP, resulting in the formation of a stable complex. GrpE releases ADP from DnaK; ATP binding to DnaK triggers the release of the substrate protein, thus completing the reaction cycle. Several rounds of ATP-dependent interactions between DnaJ, DnaK and GrpE are required for fully efficient folding. This Polynucleobacter necessarius subsp. necessarius (strain STIR1) protein is Protein GrpE.